Reading from the N-terminus, the 453-residue chain is Charged multivesicular body protein 7 (453 aa).

A disordered region spans residues 1-22; it reads MWSPEREAEAPAGGDPAGLLPP. The segment covering 10–22 has biased composition (low complexity); the sequence is APAGGDPAGLLPP. Phosphoserine is present on Ser232. Positions 243–312 form a coiled coil; the sequence is QLMQSEQLLS…DTVQGILDRI (70 aa). Positions 392-403 are enriched in basic and acidic residues; that stretch reads TKEPLDLPDNPR. Disordered regions lie at residues 392-417 and 431-453; these read TKEP…PRIS and SEGG…LKPL. Thr408 carries the post-translational modification Phosphothreonine. Phosphoserine is present on residues Ser410, Ser417, Ser431, and Ser441.

It belongs to the SNF7 family. Interacts with CHMP4B, but not with VPS25. Interacts with LEMD2 (via C-terminus).

Its subcellular location is the cytoplasm. The protein resides in the nucleus envelope. Its function is as follows. ESCRT-III-like protein required to recruit the ESCRT-III complex to the nuclear envelope (NE) during late anaphase. Together with SPAST, the ESCRT-III complex promotes NE sealing and mitotic spindle disassembly during late anaphase. Recruited to the reforming NE during anaphase by LEMD2. Plays a role in the endosomal sorting pathway. The polypeptide is Charged multivesicular body protein 7 (CHMP7) (Homo sapiens (Human)).